We begin with the raw amino-acid sequence, 223 residues long: Mitochondrial cardiolipin hydrolase (223 aa).

Residues 1-6 are Mitochondrial intermembrane-facing; sequence MGCASS. The chain crosses the membrane as a helical span at residues 7–24; it reads KEEVALTPLSDVNAAKEV. Residues 25–223 are Cytoplasmic-facing; that stretch reads ADLKAQVDQL…QFDKLWDMFK (199 aa). The PLD phosphodiesterase domain occupies 164–191; sequence TAAHMHHKFAIIDGRLLLNGSFNWTRQA. Residues histidine 169, lysine 171, and aspartate 176 contribute to the active site.

Belongs to the phospholipase D family. MitoPLD/Zucchini subfamily. In terms of assembly, homodimer.

It localises to the mitochondrion outer membrane. Its function is as follows. Plays a critical role in PIWI-interacting RNA (piRNA) biogenesis. piRNAs provide essential protection against the activity of mobile genetic elements. piRNA-mediated transposon silencing is thus critical for maintaining genome stability. Backbone-non-specific, single strand-specific nuclease, cleaving either RNA or DNA substrates with similar affinity. Produces 5' phosphate and 3' hydroxyl termini, suggesting it could directly participate in the processing of primary piRNA transcripts. Has been proposed to act as a cardiolipin hydrolase to generate phosphatidic acid at mitochondrial surface. Although it cannot be excluded that it can act as a phospholipase in some circumstances, this activity could not be confirmed. In Chlamydomonas reinhardtii (Chlamydomonas smithii), this protein is Mitochondrial cardiolipin hydrolase.